The following is a 310-amino-acid chain: MRKDRQNKITEVGIYLKDLQNRLCRAFEKEEGESRFQETLWEKPNGGGGRTRLLTEGHVIEQGGVNFSCVYGNQLPPAATQKHPEISGFAFQAEGLSLVIHPRNPYVPTVHANFRFFIAGKDEADPRWWFGGGYDLTPYYGFEEDCRHWHRVAKKACDRFGEAIYPRFKAACDDYFYLKHRNEPRGIGGLFFDDLNEWEFKRCFEFIKILGDSFLEAYLPIMQNRKNHPYGERQREFQLYRRGRYVEFNLLYDRGTRFGLEFGGRTESILMSLPPRVVWRPNWEPEPGSEEARLYEDYLVRRNWVSVSGA.

Ser97 is a substrate binding site. His101 and His111 together coordinate a divalent metal cation. His111 serves as the catalytic Proton donor. 113–115 (NFR) is a binding site for substrate. Positions 150 and 180 each coordinate a divalent metal cation. The segment at 245-280 (YVEFNLLYDRGTRFGLEFGGRTESILMSLPPRVVWR) is important for dimerization. Substrate is bound at residue 263–265 (GGR).

Belongs to the aerobic coproporphyrinogen-III oxidase family. In terms of assembly, homodimer. Requires a divalent metal cation as cofactor.

The protein localises to the cytoplasm. The enzyme catalyses coproporphyrinogen III + O2 + 2 H(+) = protoporphyrinogen IX + 2 CO2 + 2 H2O. It functions in the pathway porphyrin-containing compound metabolism; protoporphyrin-IX biosynthesis; protoporphyrinogen-IX from coproporphyrinogen-III (O2 route): step 1/1. Involved in the heme biosynthesis. Catalyzes the aerobic oxidative decarboxylation of propionate groups of rings A and B of coproporphyrinogen-III to yield the vinyl groups in protoporphyrinogen-IX. The polypeptide is Oxygen-dependent coproporphyrinogen-III oxidase (Coxiella burnetii (strain RSA 493 / Nine Mile phase I)).